A 376-amino-acid polypeptide reads, in one-letter code: Mannosyl phosphorylinositol ceramide synthase CSH1 (376 aa).

The next 2 helical transmembrane spans lie at I7–L27 and I274–T294. The tract at residues N331–R351 is disordered. S354 bears the Phosphoserine mark.

It belongs to the glycosyltransferase 32 family. In terms of assembly, heterodimer of CSH1 and CSG2.

It is found in the vacuole membrane. It catalyses the reaction a 1D-myo-inositol-1-phospho-N-[(R)-2-hydroxy-very-long-chain fatty acyl]-(R)-4-hydroxysphingoid base + GDP-alpha-D-mannose = an alpha-D-mannosyl-(1&lt;-&gt;6)-1D-myo-inositol-1-phospho-N-[(R)-2-hydroxy-very-long-chain fatty acyl]-(R)-4-hydroxysphingoid base + GDP + H(+). Functionally, involved in the synthesis of mannosyl phosphorylinositol ceramide. Catalyzes the addition of mannosyl to phosphorylinositol ceramide. This Saccharomyces cerevisiae (strain ATCC 204508 / S288c) (Baker's yeast) protein is Mannosyl phosphorylinositol ceramide synthase CSH1.